The chain runs to 366 residues: Carbamoyl phosphate synthase small chain (366 aa).

Residues 1–171 (MLERRYLVLE…KTPYVSTGSD (171 aa)) are CPSase. The L-glutamine site is built by Ser-47, Gly-221, and Gly-223. Positions 173-360 (SVVLLDFGKK…MTMMKEFKEK (188 aa)) constitute a Glutamine amidotransferase type-1 domain. Cys-248 (nucleophile) is an active-site residue. Leu-249, Gln-252, Asn-290, Gly-292, and Tyr-293 together coordinate L-glutamine. Catalysis depends on residues His-333 and Glu-335.

This sequence belongs to the CarA family. As to quaternary structure, composed of two chains; the small (or glutamine) chain promotes the hydrolysis of glutamine to ammonia, which is used by the large (or ammonia) chain to synthesize carbamoyl phosphate. Tetramer of heterodimers (alpha,beta)4.

The enzyme catalyses hydrogencarbonate + L-glutamine + 2 ATP + H2O = carbamoyl phosphate + L-glutamate + 2 ADP + phosphate + 2 H(+). It carries out the reaction L-glutamine + H2O = L-glutamate + NH4(+). It functions in the pathway amino-acid biosynthesis; L-arginine biosynthesis; carbamoyl phosphate from bicarbonate: step 1/1. The protein operates within pyrimidine metabolism; UMP biosynthesis via de novo pathway; (S)-dihydroorotate from bicarbonate: step 1/3. Functionally, small subunit of the glutamine-dependent carbamoyl phosphate synthetase (CPSase). CPSase catalyzes the formation of carbamoyl phosphate from the ammonia moiety of glutamine, carbonate, and phosphate donated by ATP, constituting the first step of 2 biosynthetic pathways, one leading to arginine and/or urea and the other to pyrimidine nucleotides. The small subunit (glutamine amidotransferase) binds and cleaves glutamine to supply the large subunit with the substrate ammonia. This is Carbamoyl phosphate synthase small chain from Staphylococcus haemolyticus (strain JCSC1435).